Reading from the N-terminus, the 277-residue chain is Soluble NSF attachment protein 29 (277 aa).

The segment covering 1-11 (MSRNPFDDDYR) has biased composition (basic and acidic residues). 3 disordered regions span residues 1-30 (MSRNPFDDDYRPSAASSTMPVKSYTTMGHY), 49-73 (ESLDSTERSRRHLENSEKIGTSTAQ), and 117-170 (KFTK…ESSR). Polar residues predominate over residues 14-28 (AASSTMPVKSYTTMG). Residues 44–106 (EKTLQESLDS…QMTQRNLNSL (63 aa)) enclose the t-SNARE coiled-coil homology 1 domain. Positions 49–65 (ESLDSTERSRRHLENSE) are enriched in basic and acidic residues. Polar residues predominate over residues 134–170 (SKSASRLSETATNLSSGGGSATFSGPSGQRTLTESSR). The t-SNARE coiled-coil homology 2 domain occupies 179–241 (EAMDNQIDEN…RDQDKQMQKI (63 aa)).

Belongs to the SNAP-25 family.

The protein localises to the synapse. The protein resides in the synaptosome. Functionally, SNAREs, soluble N-ethylmaleimide-sensitive factor-attachment protein receptors, are essential proteins for fusion of cellular membranes. SNAREs localized on opposing membranes assemble to form a trans-SNARE complex, an extended, parallel four alpha-helical bundle that drives membrane fusion. Plays a role in the processing and secretion of the aspartic protease hrg-7 from the intestine. This Caenorhabditis elegans protein is Soluble NSF attachment protein 29.